A 778-amino-acid polypeptide reads, in one-letter code: Centromere/kinetochore protein zw10 homolog (778 aa).

The stretch at 47–99 (FDRLENLEDIAEMSTRNLSNLIDQTAKDSPEMLAEIKSQAQSCENLVEFLQSM) forms a coiled coil.

It belongs to the ZW10 family. In terms of assembly, component of the RZZ complex composed of rod-1, czw-1 and zwl-1.

It localises to the chromosome. The protein localises to the centromere. It is found in the kinetochore. Its subcellular location is the cytoplasm. The protein resides in the cytoskeleton. It localises to the spindle. Functionally, essential component of the mitotic checkpoint, which prevents cells from prematurely exiting mitosis. Required for the assembly of the dynein-dynactin and mdf-1-mdf-2 complexes onto kinetochores. Its function related to the spindle assembly machinery and kinetochore-microtubule attachments likely depends on its association in the mitotic RZZ complex. The RZZ complex recruits the spindly-like protein spdl-1 to kinetochores. To prevent irregular chromosome segregation, the complex also inhibits the attachment of the kinetochore-associated NDC80 complex to microtubules. The recruitment of spdl-1 to kinetochores relieves this inhibition. Required for embryonic development. In Caenorhabditis elegans, this protein is Centromere/kinetochore protein zw10 homolog.